The chain runs to 142 residues: Large ribosomal subunit protein uL11 (142 aa).

The protein belongs to the universal ribosomal protein uL11 family. Part of the ribosomal stalk of the 50S ribosomal subunit. Interacts with L10 and the large rRNA to form the base of the stalk. L10 forms an elongated spine to which L12 dimers bind in a sequential fashion forming a multimeric L10(L12)X complex. In terms of processing, one or more lysine residues are methylated.

Its function is as follows. Forms part of the ribosomal stalk which helps the ribosome interact with GTP-bound translation factors. This Mesoplasma florum (strain ATCC 33453 / NBRC 100688 / NCTC 11704 / L1) (Acholeplasma florum) protein is Large ribosomal subunit protein uL11.